The primary structure comprises 534 residues: Putative ammonium transporter 1 (534 aa).

The next 11 helical transmembrane spans lie at 31–51 (SFFLCSMALIIFFMQCGFAYL), 69–89 (LLDSCICIIGYWAIGWALAYG), 115–135 (FFFQYVFSATAATIVSGAVAE), 139–159 (FITYVTYCTVISTFIYPVLTH), 184–204 (FAGSGLVHLCGGSISFLAAWI), 223–243 (ILGHSVPFTALGGFILMFGFL), 263–283 (ALAMINTILSGAFAALIYLGV), 291–311 (WTLLLTINACLSGMVAACAGC), 318–338 (ACIWVGLGAGLIYLAFSKLMI), 346–366 (LDAFAVHAGGGFWGLMSSSII), and 401–421 (ICALAIIAWSLGVMLPIFWIL).

This sequence belongs to the ammonia transporter channel (TC 1.A.11.2) family.

The protein resides in the membrane. Functionally, involved in the uptake of ammonia. In Caenorhabditis elegans, this protein is Putative ammonium transporter 1 (amt-1).